The following is a 213-amino-acid chain: Uracil phosphoribosyltransferase (213 aa).

5-phospho-alpha-D-ribose 1-diphosphate contacts are provided by residues Arg78, Arg103, and 130–138; that span reads DPMLATGGS. Uracil is bound by residues Ile193 and 198-200; that span reads GDA. Asp199 lines the 5-phospho-alpha-D-ribose 1-diphosphate pocket.

It belongs to the UPRTase family. Mg(2+) is required as a cofactor.

The catalysed reaction is UMP + diphosphate = 5-phospho-alpha-D-ribose 1-diphosphate + uracil. The protein operates within pyrimidine metabolism; UMP biosynthesis via salvage pathway; UMP from uracil: step 1/1. Its activity is regulated as follows. Allosterically activated by GTP. Functionally, catalyzes the conversion of uracil and 5-phospho-alpha-D-ribose 1-diphosphate (PRPP) to UMP and diphosphate. The polypeptide is Uracil phosphoribosyltransferase (Bordetella pertussis (strain Tohama I / ATCC BAA-589 / NCTC 13251)).